A 1499-amino-acid chain; its full sequence is Autophagy-related protein 2 (1499 aa).

Residues 211 to 221 (EQSVPSYGSSS) show a composition bias toward polar residues. Residues 211-237 (EQSVPSYGSSSSDKEDDNTSDSEDPLS) are disordered. The span at 224 to 234 (KEDDNTSDSED) shows a compositional bias: acidic residues.

This sequence belongs to the ATG2 family.

The protein localises to the preautophagosomal structure membrane. It localises to the endoplasmic reticulum membrane. The enzyme catalyses a 1,2-diacyl-sn-glycero-3-phosphocholine(in) = a 1,2-diacyl-sn-glycero-3-phosphocholine(out). It carries out the reaction a 1,2-diacyl-sn-glycero-3-phospho-L-serine(in) = a 1,2-diacyl-sn-glycero-3-phospho-L-serine(out). The catalysed reaction is a 1,2-diacyl-sn-glycero-3-phosphoethanolamine(in) = a 1,2-diacyl-sn-glycero-3-phosphoethanolamine(out). Its function is as follows. Lipid transfer protein required for autophagosome completion and peroxisome degradation. Tethers the edge of the isolation membrane (IM) to the endoplasmic reticulum (ER) and mediates direct lipid transfer from ER to IM for IM expansion. ATG2 binds to the ER exit site (ERES), which is the membrane source for autophagosome formation, using basic residues in its N-terminal region (NR) and to the expanding edge of the IM through its C-terminal region. The latter binding is assisted by an ATG18-PtdIns3P interaction. ATG2 then extracts phospholipids from the membrane source using its NR and transfers them to ATG9 to the IM through its predicted beta-sheet-rich structure for membrane expansion. This chain is Autophagy-related protein 2, found in Kluyveromyces marxianus (strain DMKU3-1042 / BCC 29191 / NBRC 104275) (Yeast).